The following is a 230-amino-acid chain: Ribonuclease HII (230 aa).

Positions 21–212 constitute an RNase H type-2 domain; the sequence is GPVAGVDEVG…VRRVANGSGG (192 aa). A divalent metal cation contacts are provided by Asp27, Glu28, and Asp121.

The protein belongs to the RNase HII family. The cofactor is Mn(2+). It depends on Mg(2+) as a cofactor.

Its subcellular location is the cytoplasm. The catalysed reaction is Endonucleolytic cleavage to 5'-phosphomonoester.. In terms of biological role, endonuclease that specifically degrades the RNA of RNA-DNA hybrids. This chain is Ribonuclease HII, found in Mycobacterium avium (strain 104).